Reading from the N-terminus, the 430-residue chain is Trigger factor (430 aa).

The region spanning 165–250 (TDIAIFDFEG…LHQIKTKKIP (86 aa)) is the PPIase FKBP-type domain.

The protein belongs to the FKBP-type PPIase family. Tig subfamily.

It localises to the cytoplasm. It carries out the reaction [protein]-peptidylproline (omega=180) = [protein]-peptidylproline (omega=0). In terms of biological role, involved in protein export. Acts as a chaperone by maintaining the newly synthesized protein in an open conformation. Functions as a peptidyl-prolyl cis-trans isomerase. The sequence is that of Trigger factor from Onion yellows phytoplasma (strain OY-M).